Reading from the N-terminus, the 432-residue chain is Serine hydroxymethyltransferase (432 aa).

(6S)-5,6,7,8-tetrahydrofolate contacts are provided by residues Leu-117 and 121-123 (GHL). Residue Lys-226 is modified to N6-(pyridoxal phosphate)lysine. Residue 366–368 (SPF) coordinates (6S)-5,6,7,8-tetrahydrofolate.

Belongs to the SHMT family. In terms of assembly, homodimer. It depends on pyridoxal 5'-phosphate as a cofactor.

It localises to the cytoplasm. It catalyses the reaction (6R)-5,10-methylene-5,6,7,8-tetrahydrofolate + glycine + H2O = (6S)-5,6,7,8-tetrahydrofolate + L-serine. It functions in the pathway one-carbon metabolism; tetrahydrofolate interconversion. The protein operates within amino-acid biosynthesis; glycine biosynthesis; glycine from L-serine: step 1/1. Catalyzes the reversible interconversion of serine and glycine with tetrahydrofolate (THF) serving as the one-carbon carrier. This reaction serves as the major source of one-carbon groups required for the biosynthesis of purines, thymidylate, methionine, and other important biomolecules. Also exhibits THF-independent aldolase activity toward beta-hydroxyamino acids, producing glycine and aldehydes, via a retro-aldol mechanism. This is Serine hydroxymethyltransferase from Salinibacter ruber (strain DSM 13855 / M31).